Consider the following 112-residue polypeptide: 2Fe-2S ferredoxin (112 aa).

In terms of domain architecture, 2Fe-2S ferredoxin-type spans 5-107 (IKVTFIVNDG…GIKVRLPSAT (103 aa)). Cys-42, Cys-48, Cys-51, and Cys-88 together coordinate [2Fe-2S] cluster.

This sequence belongs to the adrenodoxin/putidaredoxin family. The cofactor is [2Fe-2S] cluster.

In terms of biological role, ferredoxin are iron-sulfur proteins that transfer electrons in a wide variety of metabolic reactions. This Rickettsia felis (strain ATCC VR-1525 / URRWXCal2) (Rickettsia azadi) protein is 2Fe-2S ferredoxin (fdxB).